Consider the following 458-residue polypeptide: NADH-ubiquinone oxidoreductase chain 4 (458 aa).

12 helical membrane-spanning segments follow: residues 21 to 43 (ASLW…QWLN), 58 to 78 (IDQI…LMLL), 93 to 112 (RTFI…AFSA), 116 to 138 (TLFY…RWGN), 145 to 165 (AGIY…VTIL), 196 to 216 (GLAL…HLWL), 224 to 244 (PIAG…YGIM), 257 to 277 (LSYP…SICL), 285 to 305 (LIAY…MIQT), 309 to 329 (FSGA…LFCL), 341 to 361 (ILLL…WWLL), and 379 to 399 (LTIM…TGLA).

This sequence belongs to the complex I subunit 4 family.

The protein localises to the mitochondrion membrane. The enzyme catalyses a ubiquinone + NADH + 5 H(+)(in) = a ubiquinol + NAD(+) + 4 H(+)(out). Functionally, core subunit of the mitochondrial membrane respiratory chain NADH dehydrogenase (Complex I) that is believed to belong to the minimal assembly required for catalysis. Complex I functions in the transfer of electrons from NADH to the respiratory chain. The immediate electron acceptor for the enzyme is believed to be ubiquinone. The protein is NADH-ubiquinone oxidoreductase chain 4 (MT-ND4) of Struthio camelus (Common ostrich).